Here is a 348-residue protein sequence, read N- to C-terminus: Phosphate acyltransferase (348 aa).

It belongs to the PlsX family. In terms of assembly, homodimer. Probably interacts with PlsY.

The protein resides in the cytoplasm. It carries out the reaction a fatty acyl-[ACP] + phosphate = an acyl phosphate + holo-[ACP]. Its pathway is lipid metabolism; phospholipid metabolism. Functionally, catalyzes the reversible formation of acyl-phosphate (acyl-PO(4)) from acyl-[acyl-carrier-protein] (acyl-ACP). This enzyme utilizes acyl-ACP as fatty acyl donor, but not acyl-CoA. This chain is Phosphate acyltransferase, found in Rhizobium leguminosarum bv. trifolii (strain WSM2304).